A 207-amino-acid polypeptide reads, in one-letter code: Urease accessory protein UreG (207 aa).

Residue 14 to 21 participates in GTP binding; it reads GPVGSGKT.

It belongs to the SIMIBI class G3E GTPase family. UreG subfamily. Homodimer. UreD, UreF and UreG form a complex that acts as a GTP-hydrolysis-dependent molecular chaperone, activating the urease apoprotein by helping to assemble the nickel containing metallocenter of UreC. The UreE protein probably delivers the nickel.

The protein resides in the cytoplasm. Functionally, facilitates the functional incorporation of the urease nickel metallocenter. This process requires GTP hydrolysis, probably effectuated by UreG. In Tolumonas auensis (strain DSM 9187 / NBRC 110442 / TA 4), this protein is Urease accessory protein UreG.